A 65-amino-acid polypeptide reads, in one-letter code: Large ribosomal subunit protein uL29 (65 aa).

It belongs to the universal ribosomal protein uL29 family.

This chain is Large ribosomal subunit protein uL29, found in Paracidovorax citrulli (strain AAC00-1) (Acidovorax citrulli).